The chain runs to 504 residues: Cytochrome P450 2D10 (504 aa).

Serine 249 carries the post-translational modification Phosphoserine. Cysteine 446 serves as a coordination point for heme.

This sequence belongs to the cytochrome P450 family. Heme serves as cofactor.

It localises to the endoplasmic reticulum membrane. The protein localises to the microsome membrane. The enzyme catalyses an organic molecule + reduced [NADPH--hemoprotein reductase] + O2 = an alcohol + oxidized [NADPH--hemoprotein reductase] + H2O + H(+). Cytochromes P450 are a group of heme-thiolate monooxygenases. In liver microsomes, this enzyme is involved in an NADPH-dependent electron transport pathway. It oxidizes a variety of structurally unrelated compounds, including steroids, fatty acids, and xenobiotics. The chain is Cytochrome P450 2D10 (Cyp2d10) from Mus musculus (Mouse).